The sequence spans 189 residues: GMP synthase [glutamine-hydrolyzing] subunit A (189 aa).

Residues 3 to 187 (RIDVIDNHGQ…LSVCDQQSVA (185 aa)) enclose the Glutamine amidotransferase type-1 domain. Cysteine 73 functions as the Nucleophile in the catalytic mechanism. Catalysis depends on residues histidine 161 and glutamate 163.

Heterodimer composed of a glutamine amidotransferase subunit (A) and a GMP-binding subunit (B).

The enzyme catalyses XMP + L-glutamine + ATP + H2O = GMP + L-glutamate + AMP + diphosphate + 2 H(+). It functions in the pathway purine metabolism; GMP biosynthesis; GMP from XMP (L-Gln route): step 1/1. In terms of biological role, catalyzes the synthesis of GMP from XMP. The chain is GMP synthase [glutamine-hydrolyzing] subunit A from Haloarcula marismortui (strain ATCC 43049 / DSM 3752 / JCM 8966 / VKM B-1809) (Halobacterium marismortui).